Consider the following 677-residue polypeptide: Testis-specific Y-encoded-like protein 2 (677 aa).

The tract at residues 1–54 is disordered; that stretch reads MDRPDEGPPAKTPRLSSSEPRQRDLPPPPPPPLQRLPLPPPQQRPRPQEETEAA. K11 participates in a covalent cross-link: Glycyl lysine isopeptide (Lys-Gly) (interchain with G-Cter in SUMO2). Residue S18 is modified to Phosphoserine. Pro residues predominate over residues 25–44; it reads LPPPPPPPLQRLPLPPPQQR. Glycyl lysine isopeptide (Lys-Gly) (interchain with G-Cter in SUMO2) cross-links involve residues K158 and K160. The disordered stretch occupies residues 175-202; that stretch reads KESVRRRQRRRRRRRKQRKAKESRERSA. Over residues 178 to 193 the composition is skewed to basic residues; that stretch reads VRRRQRRRRRRRKQRK. T333 bears the Phosphothreonine mark. The interval 469–658 is disordered; that stretch reads ANENLCDSEN…EVNSEDSDIQ (190 aa). Residues 484–493 show a composition bias toward polar residues; it reads GYNTKITDNK. Basic and acidic residues predominate over residues 509–525; that stretch reads EKNTYDSEDSNSEKADG. Residues 526–540 are compositionally biased toward polar residues; sequence DNTTLRDNQQVTNIQ. Composition is skewed to acidic residues over residues 543-581 and 606-627; these read SDSD…DDDD and DYEE…ETSE. Over residues 639-650 the composition is skewed to basic and acidic residues; the sequence is DERIYGEERSEV. S648, S652, and S655 each carry phosphoserine.

Belongs to the nucleosome assembly protein (NAP) family. In terms of assembly, interacts with histones. Interacts with CASK. Part of a complex containing CASK, TBR1 and TSPYL2. Post-translationally, phosphorylation at Thr-333 impairs function on cell proliferation. Present at high levels in the pituitary gland and at moderate levels in adrenal gland, brain, testis and ovary. In brain, expressed both in mature neurons and progenitor cells (at protein level).

It is found in the nucleus. The protein resides in the cytoplasm. Part of the CASK/TBR1/TSPYL2 transcriptional complex which modulates gene expression in response to neuronal synaptic activity, probably by facilitating nucleosome assembly. May inhibit cell proliferation by inducing p53-dependent CDKN1A expression. The chain is Testis-specific Y-encoded-like protein 2 (Tspyl2) from Mus musculus (Mouse).